The chain runs to 337 residues: Protein ABHD13 (337 aa).

A helical; Signal-anchor for type II membrane protein transmembrane segment spans residues 37 to 57 (FHLYGGIVLLLLIFVSIAGIL). Residues Ser-193, Asp-268, and His-298 each act as charge relay system in the active site. Asn-299 carries N-linked (GlcNAc...) asparagine glycosylation.

Belongs to the serine esterase family.

It is found in the membrane. This is Protein ABHD13 from Mus musculus (Mouse).